Reading from the N-terminus, the 465-residue chain is UPF0324 membrane protein CC_0425 (465 aa).

Positions 97–132 (HRQPDRAPPARASEQPLRQGRRALRRRPDQRRHRPR) are disordered. Residues 115–132 (QGRRALRRRPDQRRHRPR) are compositionally biased toward basic residues. 10 consecutive transmembrane segments (helical) span residues 135–157 (AAAL…LMAV), 172–194 (LLAV…GAGL), 219–241 (AALG…GIGA), 251–273 (LAEA…LAAS), 286–308 (TALV…PPIA), 318–340 (AGVF…ASVS), 352–374 (LSRI…RTAQ), 378–400 (ISGL…ARGL), 405–427 (PALV…GAIS), and 442–464 (LAIL…TRIF).

This sequence belongs to the UPF0324 family.

The protein resides in the cell membrane. This is UPF0324 membrane protein CC_0425 from Caulobacter vibrioides (strain ATCC 19089 / CIP 103742 / CB 15) (Caulobacter crescentus).